The chain runs to 287 residues: 4-hydroxybenzoate octaprenyltransferase (287 aa).

The next 9 membrane-spanning stretches (helical) occupy residues 20 to 40 (IGSLLLLWPTLWALFLAADGL), 43 to 63 (MHVLVVFVLGVVFMRAAGCVI), 94 to 114 (LGLFGLLVLVSFVLVLTMNTL), 115 to 135 (TIMLSVVGLVLAAAYPFMKRY), 137 to 157 (HLPQLVLGMAFGWSIPMAYAA), 159 to 179 (AGELPVVAWLLFTANILWTIA), 210 to 230 (IIIGVLQLSTLVTMILIGHSL), 235 to 255 (IYYWFLLMASGLFVYQQRLIG), and 266 to 286 (FLNNNYVGMLIFLGIAISVMM).

This sequence belongs to the UbiA prenyltransferase family. It depends on Mg(2+) as a cofactor.

The protein localises to the cell inner membrane. The catalysed reaction is all-trans-octaprenyl diphosphate + 4-hydroxybenzoate = 4-hydroxy-3-(all-trans-octaprenyl)benzoate + diphosphate. It functions in the pathway cofactor biosynthesis; ubiquinone biosynthesis. Catalyzes the prenylation of para-hydroxybenzoate (PHB) with an all-trans polyprenyl group. Mediates the second step in the final reaction sequence of ubiquinone-8 (UQ-8) biosynthesis, which is the condensation of the polyisoprenoid side chain with PHB, generating the first membrane-bound Q intermediate 3-octaprenyl-4-hydroxybenzoate. This Photobacterium profundum (strain SS9) protein is 4-hydroxybenzoate octaprenyltransferase.